The chain runs to 178 residues: Inorganic pyrophosphatase (178 aa).

Residues lysine 29, arginine 43, and tyrosine 55 each coordinate substrate. Residues aspartate 65, aspartate 70, and aspartate 102 each contribute to the Mg(2+) site. Tyrosine 141 is a binding site for substrate.

This sequence belongs to the PPase family. In terms of assembly, homohexamer. The cofactor is Mg(2+).

It localises to the cytoplasm. It catalyses the reaction diphosphate + H2O = 2 phosphate + H(+). Catalyzes the hydrolysis of inorganic pyrophosphate (PPi) forming two phosphate ions. The polypeptide is Inorganic pyrophosphatase (Rickettsia typhi (strain ATCC VR-144 / Wilmington)).